We begin with the raw amino-acid sequence, 121 residues long: UPF0102 protein Syncc9902_1284 (121 aa).

The protein belongs to the UPF0102 family.

This chain is UPF0102 protein Syncc9902_1284, found in Synechococcus sp. (strain CC9902).